A 289-amino-acid chain; its full sequence is MSNQNSKKHLGHTARKRFGQNFLHDMNVIHNIVSAINPKNGQFLLEIGPGLGALTEPVAEQVDKLTVVELDRDLAERLRHHPFLNHKLTIIEQDALRFNFREYFESLELREGEGVRVFGNLPYNISTPLMFHLFKFHDLIQDMHFMLQKEVVKRLCAAPNSKAYGRLTIMAQYYCQVMPVLEVPPTAFKPAPKVDSAVVRLMPHKVLPHPVKDVYWLNRVTTQAFNQRRKTLRNALSTLFSPEQLEALNIDLNARAENLSIADYARLANWLYDNPPAVDNQEEIIDEDI.

6 residues coordinate S-adenosyl-L-methionine: N21, L23, G48, E69, D94, and N120.

This sequence belongs to the class I-like SAM-binding methyltransferase superfamily. rRNA adenine N(6)-methyltransferase family. RsmA subfamily.

It is found in the cytoplasm. The enzyme catalyses adenosine(1518)/adenosine(1519) in 16S rRNA + 4 S-adenosyl-L-methionine = N(6)-dimethyladenosine(1518)/N(6)-dimethyladenosine(1519) in 16S rRNA + 4 S-adenosyl-L-homocysteine + 4 H(+). Functionally, specifically dimethylates two adjacent adenosines (A1518 and A1519) in the loop of a conserved hairpin near the 3'-end of 16S rRNA in the 30S particle. May play a critical role in biogenesis of 30S subunits. This is Ribosomal RNA small subunit methyltransferase A from Actinobacillus pleuropneumoniae serotype 5b (strain L20).